A 142-amino-acid polypeptide reads, in one-letter code: Hemoglobin subunit alpha-A (142 aa).

The Globin domain occupies Val-2–Arg-142. His-59 provides a ligand contact to O2. His-88 provides a ligand contact to heme b.

Belongs to the globin family. As to quaternary structure, heterotetramer of two alpha chains and two beta chains. In terms of tissue distribution, red blood cells.

Its function is as follows. Involved in oxygen transport from the lung to the various peripheral tissues. In Anser anser anser (Western greylag goose), this protein is Hemoglobin subunit alpha-A (HBAA).